The sequence spans 311 residues: Methionyl-tRNA formyltransferase (311 aa).

110–113 (SLLP) serves as a coordination point for (6S)-5,6,7,8-tetrahydrofolate.

The protein belongs to the Fmt family.

It catalyses the reaction L-methionyl-tRNA(fMet) + (6R)-10-formyltetrahydrofolate = N-formyl-L-methionyl-tRNA(fMet) + (6S)-5,6,7,8-tetrahydrofolate + H(+). Functionally, attaches a formyl group to the free amino group of methionyl-tRNA(fMet). The formyl group appears to play a dual role in the initiator identity of N-formylmethionyl-tRNA by promoting its recognition by IF2 and preventing the misappropriation of this tRNA by the elongation apparatus. The chain is Methionyl-tRNA formyltransferase from Streptococcus mutans serotype c (strain ATCC 700610 / UA159).